The sequence spans 166 residues: Stress response protein NhaX (166 aa).

Belongs to the universal stress protein A family.

This chain is Stress response protein NhaX (nhaX), found in Bacillus subtilis (strain 168).